Here is a 164-residue protein sequence, read N- to C-terminus: MAEVANNEQQEQAPQFNIQRIYTKDLSFETPNSPAVFQKEWNPEVKLDLDTRSNKLSDDVYEVVLSLTVTAKNGEETAFLCEVQQAGIFSIQGLTEQQLAHSLGAYCPNVLFPYARELVGSLVGRGTFPQLNLAPVNFDALFAQYVQQRQAAAAEAPAVEEANA.

It belongs to the SecB family. As to quaternary structure, homotetramer, a dimer of dimers. One homotetramer interacts with 1 SecA dimer.

Its subcellular location is the cytoplasm. Functionally, one of the proteins required for the normal export of preproteins out of the cell cytoplasm. It is a molecular chaperone that binds to a subset of precursor proteins, maintaining them in a translocation-competent state. It also specifically binds to its receptor SecA. The protein is Protein-export protein SecB of Shewanella denitrificans (strain OS217 / ATCC BAA-1090 / DSM 15013).